Consider the following 589-residue polypeptide: Aspartate--tRNA(Asp/Asn) ligase (589 aa).

E176 is an L-aspartate binding site. The tract at residues 200-203 (QLFK) is aspartate. R222 provides a ligand contact to L-aspartate. Residues 222–224 (RDE) and Q231 contribute to the ATP site. H450 is an L-aspartate binding site. E484 contributes to the ATP binding site. Position 491 (R491) interacts with L-aspartate. ATP is bound at residue 536 to 539 (GLDR).

It belongs to the class-II aminoacyl-tRNA synthetase family. Type 1 subfamily. Homodimer.

It is found in the cytoplasm. The catalysed reaction is tRNA(Asx) + L-aspartate + ATP = L-aspartyl-tRNA(Asx) + AMP + diphosphate. Aspartyl-tRNA synthetase with relaxed tRNA specificity since it is able to aspartylate not only its cognate tRNA(Asp) but also tRNA(Asn). Reaction proceeds in two steps: L-aspartate is first activated by ATP to form Asp-AMP and then transferred to the acceptor end of tRNA(Asp/Asn). This chain is Aspartate--tRNA(Asp/Asn) ligase, found in Bacillus cytotoxicus (strain DSM 22905 / CIP 110041 / 391-98 / NVH 391-98).